Reading from the N-terminus, the 222-residue chain is Peptide methionine sulfoxide reductase MsrA (222 aa).

Cysteine 60 is a catalytic residue.

It belongs to the MsrA Met sulfoxide reductase family.

It carries out the reaction L-methionyl-[protein] + [thioredoxin]-disulfide + H2O = L-methionyl-(S)-S-oxide-[protein] + [thioredoxin]-dithiol. The enzyme catalyses [thioredoxin]-disulfide + L-methionine + H2O = L-methionine (S)-S-oxide + [thioredoxin]-dithiol. Its function is as follows. Has an important function as a repair enzyme for proteins that have been inactivated by oxidation. Catalyzes the reversible oxidation-reduction of methionine sulfoxide in proteins to methionine. The protein is Peptide methionine sulfoxide reductase MsrA of Pseudomonas putida (strain ATCC 47054 / DSM 6125 / CFBP 8728 / NCIMB 11950 / KT2440).